The primary structure comprises 166 residues: Disulfide bond formation protein B (166 aa).

The Cytoplasmic segment spans residues 1-11 (MIALPRNRRPL). Residues 12-28 (FLAVFAYCAALLAFGLY) form a helical membrane-spanning segment. Topologically, residues 29-46 (LQHYQGIEPCPMCIMQRY) are periplasmic. The cysteines at positions 38 and 41 are disulfide-linked. Residues 47–63 (AFALVGVIALVAGLHGP) form a helical membrane-spanning segment. Topologically, residues 64–70 (RGAGVRV) are cytoplasmic. Residues 71–87 (YGGLLLLTALAGGSVAA) form a helical membrane-spanning segment. Residues 88–143 (RQTWMQLYPPEIPECGPGLEYMLESFPLTSALPMIFRGAGDCSAIDWTFLGLSLAN) are Periplasmic-facing. Cysteines 102 and 129 form a disulfide. The chain crosses the membrane as a helical span at residues 144–162 (WSLLNFGAAALLALWLLFG). At 163–166 (RRVR) the chain is on the cytoplasmic side.

This sequence belongs to the DsbB family.

The protein localises to the cell inner membrane. Its function is as follows. Required for disulfide bond formation in some periplasmic proteins. Acts by oxidizing the DsbA protein. The chain is Disulfide bond formation protein B from Azoarcus sp. (strain BH72).